Here is a 251-residue protein sequence, read N- to C-terminus: Triosephosphate isomerase (251 aa).

9-11 (NWK) contacts substrate. The Electrophile role is filled by His95. The active-site Proton acceptor is Glu167. Substrate-binding positions include Gly173, Ser212, and 233 to 234 (GG).

Belongs to the triosephosphate isomerase family. In terms of assembly, homodimer.

It localises to the cytoplasm. The catalysed reaction is D-glyceraldehyde 3-phosphate = dihydroxyacetone phosphate. Its pathway is carbohydrate biosynthesis; gluconeogenesis. The protein operates within carbohydrate degradation; glycolysis; D-glyceraldehyde 3-phosphate from glycerone phosphate: step 1/1. In terms of biological role, involved in the gluconeogenesis. Catalyzes stereospecifically the conversion of dihydroxyacetone phosphate (DHAP) to D-glyceraldehyde-3-phosphate (G3P). The protein is Triosephosphate isomerase of Pseudomonas fluorescens (strain ATCC BAA-477 / NRRL B-23932 / Pf-5).